The primary structure comprises 363 residues: Phosphoserine aminotransferase (363 aa).

Arginine 42 provides a ligand contact to L-glutamate. Pyridoxal 5'-phosphate-binding positions include glycine 76–arginine 77, tryptophan 102, threonine 156, aspartate 175, and glutamine 198. N6-(pyridoxal phosphate)lysine is present on lysine 199. Asparagine 240–threonine 241 serves as a coordination point for pyridoxal 5'-phosphate.

Belongs to the class-V pyridoxal-phosphate-dependent aminotransferase family. SerC subfamily. In terms of assembly, homodimer. It depends on pyridoxal 5'-phosphate as a cofactor.

It localises to the cytoplasm. It catalyses the reaction O-phospho-L-serine + 2-oxoglutarate = 3-phosphooxypyruvate + L-glutamate. The enzyme catalyses 4-(phosphooxy)-L-threonine + 2-oxoglutarate = (R)-3-hydroxy-2-oxo-4-phosphooxybutanoate + L-glutamate. It functions in the pathway amino-acid biosynthesis; L-serine biosynthesis; L-serine from 3-phospho-D-glycerate: step 2/3. It participates in cofactor biosynthesis; pyridoxine 5'-phosphate biosynthesis; pyridoxine 5'-phosphate from D-erythrose 4-phosphate: step 3/5. Catalyzes the reversible conversion of 3-phosphohydroxypyruvate to phosphoserine and of 3-hydroxy-2-oxo-4-phosphonooxybutanoate to phosphohydroxythreonine. The sequence is that of Phosphoserine aminotransferase from Shewanella sp. (strain W3-18-1).